The sequence spans 245 residues: 1-(5-phosphoribosyl)-5-[(5-phosphoribosylamino)methylideneamino] imidazole-4-carboxamide isomerase (245 aa).

Asp7 functions as the Proton acceptor in the catalytic mechanism. Asp129 acts as the Proton donor in catalysis.

This sequence belongs to the HisA/HisF family.

The protein resides in the cytoplasm. The catalysed reaction is 1-(5-phospho-beta-D-ribosyl)-5-[(5-phospho-beta-D-ribosylamino)methylideneamino]imidazole-4-carboxamide = 5-[(5-phospho-1-deoxy-D-ribulos-1-ylimino)methylamino]-1-(5-phospho-beta-D-ribosyl)imidazole-4-carboxamide. It functions in the pathway amino-acid biosynthesis; L-histidine biosynthesis; L-histidine from 5-phospho-alpha-D-ribose 1-diphosphate: step 4/9. This chain is 1-(5-phosphoribosyl)-5-[(5-phosphoribosylamino)methylideneamino] imidazole-4-carboxamide isomerase, found in Shewanella sp. (strain MR-4).